A 95-amino-acid chain; its full sequence is Large ribosomal subunit protein bL25 (95 aa).

Belongs to the bacterial ribosomal protein bL25 family. In terms of assembly, part of the 50S ribosomal subunit; part of the 5S rRNA/L5/L18/L25 subcomplex. Contacts the 5S rRNA. Binds to the 5S rRNA independently of L5 and L18.

Its function is as follows. This is one of the proteins that binds to the 5S RNA in the ribosome where it forms part of the central protuberance. The chain is Large ribosomal subunit protein bL25 from Shewanella woodyi (strain ATCC 51908 / MS32).